We begin with the raw amino-acid sequence, 42 residues long: Lanthionine-containing peptide SapB precursor RamS (42 aa).

Residues 1–21 constitute a propeptide that is removed on maturation; the sequence is MNLFDLQSMETPKEEAMGDVE. Residues 1–21 are disordered; sequence MNLFDLQSMETPKEEAMGDVE. 2 consecutive cross-links (lanthionine (Ser-Cys)) follow at residues 24–31 and 34–41; these read SRASLLLC and SSLSITTC. A 2,3-didehydroalanine (Ser) mark is found at Ser-27 and Ser-37.

It belongs to the lanthionine-containing morphogen family. Post-translationally, maturation involves the enzymatic conversion of Ser into dehydrated AA and the formation of thioether bonds with cysteine, probably by RamC. This is followed by membrane translocation and cleavage of the modified precursor. The RamS precursor protein (detected by an anti-propeptide antibody and by a C-terminal His-tag) is detected from at least 16 hours post-germination; its apparent molecular weight decreases starting from about 34 hours, when its probable modifying enzyme ramC is transcribed. Surfactin, a B.subtilis cyclic lipopeptide antibiotic which prevents aerial hyphae formation in S.coelicolor, decreases localization of RamS precursor protein to the cell membrane, suggesting that processing only occurs at the cell membrane.

It localises to the cell membrane. The protein localises to the secreted. Its subcellular location is the spore wall. Functionally, stably accumulated precursor of SapB. In terms of biological role, lanthionine-containing peptide devoid of antibiotic properties. A surface active peptide involved in the efficient formation of aerial mycelium when cells are grown in rich media. Has an overlapping function with the surface-active chaplin proteins; chaplins are essential on minimal medium while on rich medium both chaplins and SapB are required for efficient aerial hyphae formation. Required under conditions of high osmolarity where it may change the physical properties of the chaplin layer to allow hyphae to grow into air. Suggested to self-assemble at air-water interfaces, thus providing a film of surfactant through which nascent aerial hyphae can emerge; the aerial hyphae differentiate further into spores. Application to bald mutants (bld, unable to make aerial hyphae) restores hyphae growth. Application to chaplin negative mutants as well as ramC-ramS-ramA-ramB and ramR deletions also restores aerial hyphae growth and sporulation. Reduces surface tension of water from 72 to 30 mJ/m(2). The protein is Lanthionine-containing peptide SapB precursor RamS (ramS) of Streptomyces coelicolor (strain ATCC BAA-471 / A3(2) / M145).